Here is a 374-residue protein sequence, read N- to C-terminus: MVPNLMVIKKHLIGLLLILCPLSLQAQPLFSVVDIQGIRENQLVGYGLVVGLSGTGDKSQTKFTSQSVKNMLSQFGVQLPANVNPKLKNVAAVAVNATLPALASKGQSLDITVSSIGDAKSLRGGTLLLTPLKGADGQIYAIAQGNLVVGGVVAQGNSGSGITINIPTAGLIPNGGIIEREVTSSFLTASTVVLNLKKPGFNTARNIEKEINELFGPDVALAQSHARIHVRAPHDPSQRVTFLAMLENLDIETGPRPARVVFNARTGTIVVGKNVKVHTAAVSHGNLTVSVMESFNVSQPNAFGRGNTAVTPETDVSIDQERGKVFIWPDSDEGTSLQTIVDAVNSLGATPNDLMAILIALDEAGALDGELVVL.

The first 26 residues, 1-26, serve as a signal peptide directing secretion; sequence MVPNLMVIKKHLIGLLLILCPLSLQA.

Belongs to the FlgI family. In terms of assembly, the basal body constitutes a major portion of the flagellar organelle and consists of four rings (L,P,S, and M) mounted on a central rod.

The protein localises to the periplasm. It is found in the bacterial flagellum basal body. Functionally, assembles around the rod to form the L-ring and probably protects the motor/basal body from shearing forces during rotation. The sequence is that of Flagellar P-ring protein 1 from Photobacterium profundum (strain SS9).